The primary structure comprises 104 residues: L-rhamnose mutarotase (104 aa).

Y18 is a substrate binding site. Residue H22 is the Proton donor of the active site. Substrate-binding positions include Y41 and 76-77 (WW).

It belongs to the rhamnose mutarotase family. As to quaternary structure, homodimer.

The protein localises to the cytoplasm. It catalyses the reaction alpha-L-rhamnose = beta-L-rhamnose. Its pathway is carbohydrate metabolism; L-rhamnose metabolism. Functionally, involved in the anomeric conversion of L-rhamnose. The sequence is that of L-rhamnose mutarotase from Oceanobacillus iheyensis (strain DSM 14371 / CIP 107618 / JCM 11309 / KCTC 3954 / HTE831).